The primary structure comprises 36 residues: Photosystem I reaction center subunit VIII (36 aa).

The helical transmembrane segment at 8 to 28 (AILVPIVGLVFPALSMALFFI) threads the bilayer.

Belongs to the PsaI family.

Its subcellular location is the plastid. It localises to the chloroplast thylakoid membrane. In terms of biological role, may help in the organization of the PsaL subunit. This is Photosystem I reaction center subunit VIII from Phaeodactylum tricornutum (strain CCAP 1055/1).